The chain runs to 433 residues: Dihydrolipoyllysine-residue acetyltransferase component of pyruvate dehydrogenase complex (433 aa).

Residues 2–77 (AFEFRLPDIG…VVGDVIVKID (76 aa)) enclose the Lipoyl-binding domain. Lysine 43 carries the N6-lipoyllysine modification. 2 disordered regions span residues 80-134 (DAEE…PSVR) and 164-204 (YLNG…FPET). Composition is skewed to basic and acidic residues over residues 84 to 103 (MQFK…KEQE) and 117 to 126 (EKTEVDESKT). One can recognise a Peripheral subunit-binding (PSBD) domain in the interval 128 to 165 (KAMPSVRKYARENGVNIKAVNGSGKNGRITKEDIDAYL). The span at 166–188 (NGGSSEEGSNTSVASESTSSDVV) shows a compositional bias: low complexity. The active site involves histidine 404.

It belongs to the 2-oxoacid dehydrogenase family. In terms of assembly, forms a 24-polypeptide structural core with octahedral symmetry. Requires (R)-lipoate as cofactor.

The enzyme catalyses N(6)-[(R)-dihydrolipoyl]-L-lysyl-[protein] + acetyl-CoA = N(6)-[(R)-S(8)-acetyldihydrolipoyl]-L-lysyl-[protein] + CoA. In terms of biological role, the pyruvate dehydrogenase complex catalyzes the overall conversion of pyruvate to acetyl-CoA and CO(2). It contains multiple copies of three enzymatic components: pyruvate dehydrogenase (E1), dihydrolipoamide acetyltransferase (E2) and lipoamide dehydrogenase (E3). This chain is Dihydrolipoyllysine-residue acetyltransferase component of pyruvate dehydrogenase complex (pdhC), found in Staphylococcus epidermidis (strain ATCC 12228 / FDA PCI 1200).